The sequence spans 164 residues: Urease subunit beta (164 aa).

Composition is skewed to polar residues over residues 1-10 (MSTKTNSTKA) and 20-30 (TNRGTKSSAGY). The tract at residues 1-30 (MSTKTNSTKATSEKTDSLKTNRGTKSSAGY) is disordered.

This sequence belongs to the urease beta subunit family. As to quaternary structure, heterotrimer of UreA (gamma), UreB (beta) and UreC (alpha) subunits. Three heterotrimers associate to form the active enzyme.

The protein localises to the cytoplasm. It carries out the reaction urea + 2 H2O + H(+) = hydrogencarbonate + 2 NH4(+). The protein operates within nitrogen metabolism; urea degradation; CO(2) and NH(3) from urea (urease route): step 1/1. Functionally, expression of the urease operon increases the likelihood of bacterial survival by contributing to acid resistance in vitro and in vivo in BALB/c mice. Y.enterocolitica enters the body via an oral path and must survive the acidic stomach before being able to colonize the intestinal mucosa. This is Urease subunit beta from Yersinia enterocolitica.